We begin with the raw amino-acid sequence, 407 residues long: MIGFEIFLAIGMFTAIVLGLVAIILVARAKLVSSGDVTIQINGEHSLTVPAGGKLLQTLATNNVFLSSACGGGGTCAQCKCVVVEGGGEMLPTEESHFTRRQAKEGWRLSCQTPVKQDMQIRVPEEVFGVKKWECTVESNPNVATFIKELTLRLPDGESVDFRAGGYVQLECPPHVVEYKDFDIQPEYRGDWDKFNMWRYVSKVDETVIRAYSMANYPEEQGVVKFNIRIASPPPGSDLPPGQMSSWVFNLKPGDKVTVYGPFGEFFAKDTEAEMVFIGGGAGMAPMRSHIFDQLRRLKSNRKISFWYGARSLREAFYTEEYDQLQAENPNFQWHLALSDPQPEDNWTGLTGFIHNVLFENYLKDHPAPEDCEFYMCGPPMMNAAVIKMLTDLGVERENILLDDFGG.

Residues 6–26 traverse the membrane as a helical segment; the sequence is IFLAIGMFTAIVLGLVAIILV. The 2Fe-2S ferredoxin-type domain occupies 35–127; it reads GDVTIQINGE…DMQIRVPEEV (93 aa). The [2Fe-2S] cluster site is built by Cys70, Cys76, Cys79, and Cys111. In terms of domain architecture, FAD-binding FR-type spans 130–269; it reads VKKWECTVES…YGPFGEFFAK (140 aa).

This sequence belongs to the NqrF family. As to quaternary structure, composed of six subunits; NqrA, NqrB, NqrC, NqrD, NqrE and NqrF. Requires [2Fe-2S] cluster as cofactor. It depends on FAD as a cofactor.

It is found in the cell inner membrane. The enzyme catalyses a ubiquinone + n Na(+)(in) + NADH + H(+) = a ubiquinol + n Na(+)(out) + NAD(+). Its function is as follows. NQR complex catalyzes the reduction of ubiquinone-1 to ubiquinol by two successive reactions, coupled with the transport of Na(+) ions from the cytoplasm to the periplasm. The first step is catalyzed by NqrF, which accepts electrons from NADH and reduces ubiquinone-1 to ubisemiquinone by a one-electron transfer pathway. The sequence is that of Na(+)-translocating NADH-quinone reductase subunit F from Pseudomonas aeruginosa (strain UCBPP-PA14).